We begin with the raw amino-acid sequence, 264 residues long: Phosphonoacetaldehyde hydrolase (264 aa).

The Nucleophile role is filled by D9. Residues D9 and A11 each contribute to the Mg(2+) site. Residue K50 is the Schiff-base intermediate with substrate of the active site. A Mg(2+)-binding site is contributed by D183.

Belongs to the HAD-like hydrolase superfamily. PhnX family. In terms of assembly, homodimer. Requires Mg(2+) as cofactor.

The enzyme catalyses phosphonoacetaldehyde + H2O = acetaldehyde + phosphate + H(+). Its function is as follows. Involved in phosphonate degradation. The sequence is that of Phosphonoacetaldehyde hydrolase from Bacillus thuringiensis (strain Al Hakam).